A 229-amino-acid chain; its full sequence is Heptaprenylglyceryl phosphate synthase (229 aa).

Sn-glycerol 1-phosphate is bound at residue lysine 12. Mg(2+)-binding residues include aspartate 14 and serine 40. Sn-glycerol 1-phosphate is bound by residues 159–164 (YLEYSG), glycine 189, and 209–210 (GN).

This sequence belongs to the GGGP/HepGP synthase family. Group I subfamily. As to quaternary structure, homodimer. Mg(2+) serves as cofactor.

The catalysed reaction is sn-glycerol 1-phosphate + all-trans-heptaprenyl diphosphate = 3-heptaprenyl-sn-glycero-1-phosphate + diphosphate. The protein operates within membrane lipid metabolism; glycerophospholipid metabolism. In terms of biological role, prenyltransferase that catalyzes in vivo the transfer of the heptaprenyl moiety of heptaprenyl pyrophosphate (HepPP; 35 carbon atoms) to the C3 hydroxyl of sn-glycerol-1-phosphate (G1P), producing heptaprenylglyceryl phosphate (HepGP). This reaction is an ether-bond-formation step in the biosynthesis of archaea-type G1P-based membrane lipids found in Bacillales. The chain is Heptaprenylglyceryl phosphate synthase from Bacillus cereus (strain B4264).